A 236-amino-acid polypeptide reads, in one-letter code: Biosynthetic peptidoglycan transglycosylase (236 aa).

A helical transmembrane segment spans residues 12-31 (ALLWFAAGSVLVVLVLRWVP).

It belongs to the glycosyltransferase 51 family.

It is found in the cell inner membrane. The catalysed reaction is [GlcNAc-(1-&gt;4)-Mur2Ac(oyl-L-Ala-gamma-D-Glu-L-Lys-D-Ala-D-Ala)](n)-di-trans,octa-cis-undecaprenyl diphosphate + beta-D-GlcNAc-(1-&gt;4)-Mur2Ac(oyl-L-Ala-gamma-D-Glu-L-Lys-D-Ala-D-Ala)-di-trans,octa-cis-undecaprenyl diphosphate = [GlcNAc-(1-&gt;4)-Mur2Ac(oyl-L-Ala-gamma-D-Glu-L-Lys-D-Ala-D-Ala)](n+1)-di-trans,octa-cis-undecaprenyl diphosphate + di-trans,octa-cis-undecaprenyl diphosphate + H(+). It functions in the pathway cell wall biogenesis; peptidoglycan biosynthesis. Functionally, peptidoglycan polymerase that catalyzes glycan chain elongation from lipid-linked precursors. This is Biosynthetic peptidoglycan transglycosylase from Pseudomonas syringae pv. syringae (strain B728a).